Consider the following 250-residue polypeptide: Entry-fusion complex associated protein OPG095 (250 aa).

Gly2 carries the N-myristoyl glycine; by host lipid modification. The tract at residues 2–12 (GAAASIQTTVN) is targeting to MV membrane. Residues 2–183 (GAAASIQTTV…IAPKQVAGTG (182 aa)) are Virion surface-facing. 3 disulfides stabilise this stretch: Cys34–Cys57, Cys49–Cys136, and Cys116–Cys158. The helical transmembrane segment at 184-204 (VQFYMIVIGVIILAALFMYYA) threads the bilayer. Residues 205-250 (KRMLFTSTNDKIKLILANKENVHWTTYMDTFFRTSPMVIATTDMQN) lie on the Intravirion side of the membrane.

Belongs to the orthopoxvirus OPG095 family. In terms of assembly, component of the entry fusion complex (EFC) composed of OPG053/F9, OPG076/O3, OPG086/G3, OPG094/G9, OPG095/L1, OPG099/L5, OPG107/H2, OPG143/A16, OPG104/J5, OPG147/A21 and OPG155/A28. Except for OPG095/L1 and OPG053/F9, each of the EFC proteins is required for assembly or stability of the complex. Post-translationally, myristoylated. In terms of processing, disulfid bonds are oxidized in the cytoplasm by OPG088 protein. Unglycosylated because produced in viral factories instead of the classic ER -Golgi route.

It is found in the virion membrane. Component of the entry fusion complex (EFC), which consists of 11 proteins. During cell infection, this complex mediates entry of the virion core into the host cytoplasm by a two-step mechanism consisting of lipid mixing of the viral and cellular membranes and subsequent pore formation. This chain is Entry-fusion complex associated protein OPG095 (OPG099), found in Bos taurus (Bovine).